The following is a 361-amino-acid chain: tRNA/tmRNA (uracil-C(5))-methyltransferase (361 aa).

Residues glutamine 185, tyrosine 213, asparagine 218, glutamate 234, and aspartate 294 each contribute to the S-adenosyl-L-methionine site. Residue cysteine 319 is the Nucleophile of the active site. The active-site Proton acceptor is glutamate 353.

The protein belongs to the class I-like SAM-binding methyltransferase superfamily. RNA M5U methyltransferase family. TrmA subfamily.

It carries out the reaction uridine(54) in tRNA + S-adenosyl-L-methionine = 5-methyluridine(54) in tRNA + S-adenosyl-L-homocysteine + H(+). The enzyme catalyses uridine(341) in tmRNA + S-adenosyl-L-methionine = 5-methyluridine(341) in tmRNA + S-adenosyl-L-homocysteine + H(+). In terms of biological role, dual-specificity methyltransferase that catalyzes the formation of 5-methyluridine at position 54 (m5U54) in all tRNAs, and that of position 341 (m5U341) in tmRNA (transfer-mRNA). The chain is tRNA/tmRNA (uracil-C(5))-methyltransferase from Pseudomonas entomophila (strain L48).